The chain runs to 237 residues: DNA repair protein RecO (237 aa).

Belongs to the RecO family.

Involved in DNA repair and RecF pathway recombination. The chain is DNA repair protein RecO from Rickettsia conorii (strain ATCC VR-613 / Malish 7).